Here is a 522-residue protein sequence, read N- to C-terminus: DNA damage-binding protein cmr1 (522 aa).

Residues 34–47 (VFTPTLPNRATGSQ) are compositionally biased toward polar residues. 2 disordered regions span residues 34-89 (VFTP…KRKA) and 217-239 (QEKPTSVKQEDEDEEDDDPDPVL). Basic residues predominate over residues 49–59 (KTKKKPAPKKV). Residues 182–223 (LTPERVYTMTFHPSETKPLIFAGDKMGHLGILDASQEKPTSV) form a WD 1 repeat. The span at 226–236 (EDEDEEDDDPD) shows a compositional bias: acidic residues. WD repeat units follow at residues 244–284 (PHTR…SVER), 294–331 (VPLSGLDMAADDPNTLYWTTLEGEFGRYDMRTPKQGSV), 336–376 (LSEK…RREP), 381–422 (EHQS…ASWK), 445–488 (GRWV…LAQL), and 491–522 (DGITAVPAVAVFHRSKNWIAGGTASGKICLWM).

It belongs to the WD repeat DDB2/WDR76 family.

Its function is as follows. DNA-binding protein that binds to both single- and double-stranded DNA. Binds preferentially to UV-damaged DNA. May be involved in DNA-metabolic processes. This chain is DNA damage-binding protein cmr1, found in Aspergillus oryzae (strain ATCC 42149 / RIB 40) (Yellow koji mold).